Here is a 515-residue protein sequence, read N- to C-terminus: GMP synthase [glutamine-hydrolyzing] (515 aa).

Residues 10–200 (TIIVLDFGSQ…VFGVCGCSEG (191 aa)) enclose the Glutamine amidotransferase type-1 domain. The active-site Nucleophile is the cysteine 87. Catalysis depends on residues histidine 174 and glutamate 176. The GMPS ATP-PPase domain occupies 201–390 (WNMENFIEVE…LGIPDEIVWR (190 aa)). An ATP-binding site is contributed by 228–234 (SGGVDSS).

Homodimer.

It carries out the reaction XMP + L-glutamine + ATP + H2O = GMP + L-glutamate + AMP + diphosphate + 2 H(+). Its pathway is purine metabolism; GMP biosynthesis; GMP from XMP (L-Gln route): step 1/1. In terms of biological role, catalyzes the synthesis of GMP from XMP. This chain is GMP synthase [glutamine-hydrolyzing], found in Bacillus cereus (strain ATCC 14579 / DSM 31 / CCUG 7414 / JCM 2152 / NBRC 15305 / NCIMB 9373 / NCTC 2599 / NRRL B-3711).